The following is a 1001-amino-acid chain: X-linked retinitis pigmentosa GTPase regulator (1001 aa).

RCC1 repeat units follow at residues 54–105, 106–158, 159–208, 209–261, 262–313, and 314–367; these read NKLY…STDT, GGVY…LTED, GKLF…VTMD, GELY…LTEK, VVYA…MTEL, and GLLY…FATP. Positions 404-428 are disordered; it reads SLSARLRRRERERPPCSASMVGTLP. Position 518 is a phosphoserine (Ser-518). Basic and acidic residues-rich tracts occupy residues 631–641 and 659–671; these read KKIRESEENSK and EDNK…RRSS. Disordered stretches follow at residues 631–738, 794–869, 902–925, and 962–1001; these read KKIR…WYDR, NLEF…EGSE, PKGH…DPTS, and GDQI…CTIL. Acidic residues-rich tracts occupy residues 679 to 691 and 717 to 731; these read SETE…DSYM and EKDE…EVET. 3 stretches are compositionally biased toward basic and acidic residues: residues 794-818, 847-857, and 902-911; these read NLEF…EKEA, EERKEGEKEIV, and PKGHMYDRVK. The span at 976-1001 shows a compositional bias: polar residues; sequence QNHMGQNLQDSTTPNMEGKSKSCTIL. Cys-998 carries the post-translational modification Cysteine methyl ester. A lipid anchor (S-geranylgeranyl cysteine) is attached at Cys-998. The propeptide at 999–1001 is removed in mature form; the sequence is TIL.

As to quaternary structure, interacts with SPATA7. Interacts with PDE6D. Interacts with RPGRIP1 and RPGRIP1L; PDE6D, RPGRIP1 and RPGRIP1L may compete for the same binding sites. Interacts with NPM1. Interacts with PDE6D. Isoform 5 interacts (via N-terminus) with SMC1A and SMC3. Isoform 5 interacts with CEP290. Interacts with WHRN. Interacts with RAB37 and RAB8A (in GDP-bound forms); functions as GEF for RAB37 and RAB8A. In terms of processing, prenylated. In terms of tissue distribution, expressed in the retina (at protein level). Located mainly in the connecting cilia between the outer segment and inner segment and also observed in the outer plexiform layer, inner plexiform layer, and ganglion cell layer of the retinas. Isoform 1: Expressed in the retina (at protein level). Isoform 5: Expressed in the retina (at protein level). Expressed in the brain. Expressed in the testis (at protein level). Expressed in kidney (at protein level).

It localises to the golgi apparatus. The protein localises to the cytoplasm. Its subcellular location is the cytoskeleton. It is found in the microtubule organizing center. The protein resides in the centrosome. It localises to the cell projection. The protein localises to the cilium. Its subcellular location is the cilium basal body. It is found in the cilium axoneme. The protein resides in the flagellum axoneme. Functionally, acts as a guanine-nucleotide releasing factor (GEF) for RAB8A and RAB37 by promoting the conversion of inactive RAB-GDP to the active form RAB-GTP. GEF activity towards RAB8A may facilitate ciliary trafficking by modulating ciliary intracellular localization of RAB8A. GEF activity towards RAB37 maintains autophagic homeostasis and retinal function. Involved in photoreceptor integrity. May control cilia formation by regulating actin stress filaments and cell contractility. May be involved in microtubule organization and regulation of transport in primary cilia. Its function is as follows. Isoform 5 may play a critical role in spermatogenesis and in intraflagellar transport processes. In Mus musculus (Mouse), this protein is X-linked retinitis pigmentosa GTPase regulator.